Consider the following 232-residue polypeptide: MKIGIIGAMEEEVTLLRDKIDNRQTITLGGCEIYTGQLNGTEVALLKSGIGKVAAALGATLLLGHCKPDVIINTGSAGGLASTLKVGDIVVSDEARYHDADVTAFGYEYGQLPGCPAGFKADDKLIAAAESCIRELNLNAVRGLIVSGDAFINGSVGLAKIRHNFPDAVAVEMEATAIAHVCHNFNVPFVVVRAISDVADQQSHLSFDEFLAVAAKQSTLMVETLVQKLAHG.

Glu-12 acts as the Proton acceptor in catalysis. Substrate is bound by residues Gly-78, Ile-152, and 173–174 (ME). Asp-197 acts as the Proton donor in catalysis.

It belongs to the PNP/UDP phosphorylase family. MtnN subfamily. In terms of assembly, homodimer.

It catalyses the reaction S-adenosyl-L-homocysteine + H2O = S-(5-deoxy-D-ribos-5-yl)-L-homocysteine + adenine. The catalysed reaction is S-methyl-5'-thioadenosine + H2O = 5-(methylsulfanyl)-D-ribose + adenine. The enzyme catalyses 5'-deoxyadenosine + H2O = 5-deoxy-D-ribose + adenine. It participates in amino-acid biosynthesis; L-methionine biosynthesis via salvage pathway; S-methyl-5-thio-alpha-D-ribose 1-phosphate from S-methyl-5'-thioadenosine (hydrolase route): step 1/2. In terms of biological role, catalyzes the irreversible cleavage of the glycosidic bond in both 5'-methylthioadenosine (MTA) and S-adenosylhomocysteine (SAH/AdoHcy) to adenine and the corresponding thioribose, 5'-methylthioribose and S-ribosylhomocysteine, respectively. Also cleaves 5'-deoxyadenosine, a toxic by-product of radical S-adenosylmethionine (SAM) enzymes, into 5-deoxyribose and adenine. Thus, is required for in vivo function of the radical SAM enzymes biotin synthase and lipoic acid synthase, that are inhibited by 5'-deoxyadenosine accumulation. In Salmonella paratyphi A (strain ATCC 9150 / SARB42), this protein is 5'-methylthioadenosine/S-adenosylhomocysteine nucleosidase.